A 204-amino-acid polypeptide reads, in one-letter code: uncharacterized protein (204 aa).

The stretch at 109 to 136 (QFDIDVHKDQIEKLKDLYKALLRIAETT) forms a coiled coil.

This is an uncharacterized protein from Bacillus subtilis (strain 168).